Reading from the N-terminus, the 1022-residue chain is rDNA transcriptional regulator POL5 (1022 aa).

3 stretches are compositionally biased toward acidic residues: residues 706 to 719 (EEFEEIKEENDASE), 728 to 748 (SESESESDSDDADEKDEEDEA), and 781 to 802 (DLDQLEGLSDDGGDDEDEESMD). 2 disordered regions span residues 706-748 (EEFE…EDEA) and 778-805 (GEVDLDQLEGLSDDGGDDEDEESMDDEK). Serine 789 bears the Phosphoserine mark.

The protein belongs to the MYBBP1A family. As to quaternary structure, interacts with FRK1.

The protein localises to the nucleus. It localises to the nucleolus. The catalysed reaction is DNA(n) + a 2'-deoxyribonucleoside 5'-triphosphate = DNA(n+1) + diphosphate. Stimulated by PCNA and inhibited by aphidicolin. Functionally, plays an important role in the regulation of rRNA transcription. Binds near or at the enhancer region of rRNA repeating units. May have DNA polymerase activity, but it is not required for in vivo function. This is rDNA transcriptional regulator POL5 from Saccharomyces cerevisiae (strain ATCC 204508 / S288c) (Baker's yeast).